The sequence spans 159 residues: MIALYPGSFDPITFGHLDIIERASRLFSKVIVAVLKNPNKTPLFTPEQRQAQILLSVAHLKNVEVDTFSGLTVAYARQRGARVIVRGLRVLSDFDVELQMAHTNKLLAPELETLFLATASEHSFVSSSLVKEVAKLGGPIDHLVPPPVAQDLRERFPLT.

Ser8 serves as a coordination point for substrate. ATP is bound by residues Ser8 to Phe9 and His16. Substrate is bound by residues Lys40, Thr72, and Arg86. ATP contacts are provided by residues Gly87 to Arg89, Glu97, and His122 to Ser128.

Belongs to the bacterial CoaD family. In terms of assembly, homohexamer. Requires Mg(2+) as cofactor.

The protein localises to the cytoplasm. The enzyme catalyses (R)-4'-phosphopantetheine + ATP + H(+) = 3'-dephospho-CoA + diphosphate. The protein operates within cofactor biosynthesis; coenzyme A biosynthesis; CoA from (R)-pantothenate: step 4/5. Functionally, reversibly transfers an adenylyl group from ATP to 4'-phosphopantetheine, yielding dephospho-CoA (dPCoA) and pyrophosphate. The polypeptide is Phosphopantetheine adenylyltransferase (Synechococcus sp. (strain JA-3-3Ab) (Cyanobacteria bacterium Yellowstone A-Prime)).